The primary structure comprises 313 residues: 4-hydroxy-3-methylbut-2-enyl diphosphate reductase (313 aa).

A [4Fe-4S] cluster-binding site is contributed by C12. Residues H41 and H74 each contribute to the (2E)-4-hydroxy-3-methylbut-2-enyl diphosphate site. Positions 41 and 74 each coordinate dimethylallyl diphosphate. Isopentenyl diphosphate contacts are provided by H41 and H74. C96 contributes to the [4Fe-4S] cluster binding site. H124 provides a ligand contact to (2E)-4-hydroxy-3-methylbut-2-enyl diphosphate. H124 is a binding site for dimethylallyl diphosphate. Position 124 (H124) interacts with isopentenyl diphosphate. The active-site Proton donor is the E126. T167 lines the (2E)-4-hydroxy-3-methylbut-2-enyl diphosphate pocket. Residue C197 coordinates [4Fe-4S] cluster. The (2E)-4-hydroxy-3-methylbut-2-enyl diphosphate site is built by S225, S226, N227, and S269. Residues S225, S226, N227, and S269 each coordinate dimethylallyl diphosphate. Isopentenyl diphosphate-binding residues include S225, S226, N227, and S269.

This sequence belongs to the IspH family. The cofactor is [4Fe-4S] cluster.

It carries out the reaction isopentenyl diphosphate + 2 oxidized [2Fe-2S]-[ferredoxin] + H2O = (2E)-4-hydroxy-3-methylbut-2-enyl diphosphate + 2 reduced [2Fe-2S]-[ferredoxin] + 2 H(+). It catalyses the reaction dimethylallyl diphosphate + 2 oxidized [2Fe-2S]-[ferredoxin] + H2O = (2E)-4-hydroxy-3-methylbut-2-enyl diphosphate + 2 reduced [2Fe-2S]-[ferredoxin] + 2 H(+). It functions in the pathway isoprenoid biosynthesis; dimethylallyl diphosphate biosynthesis; dimethylallyl diphosphate from (2E)-4-hydroxy-3-methylbutenyl diphosphate: step 1/1. It participates in isoprenoid biosynthesis; isopentenyl diphosphate biosynthesis via DXP pathway; isopentenyl diphosphate from 1-deoxy-D-xylulose 5-phosphate: step 6/6. Functionally, catalyzes the conversion of 1-hydroxy-2-methyl-2-(E)-butenyl 4-diphosphate (HMBPP) into a mixture of isopentenyl diphosphate (IPP) and dimethylallyl diphosphate (DMAPP). Acts in the terminal step of the DOXP/MEP pathway for isoprenoid precursor biosynthesis. The polypeptide is 4-hydroxy-3-methylbut-2-enyl diphosphate reductase (Methylococcus capsulatus (strain ATCC 33009 / NCIMB 11132 / Bath)).